Consider the following 1898-residue polypeptide: MLLSGGDPPAQEWFMVQTKSKPRVQRQRLQVQRIFRVKLNAFQSRPDTPYFWLQLEGPRENMGKAKEYLKGLCSPELWKEVRYPPILHCAFLGAQGLFLDCLCWSTLAYLVPGPPGSLMVGGLTESFIMTQNWLEELVGRLRWGPAPLLTPRGIWEAEVTRAFGALVWIRGDQHAGDLLQLPPAVQELLLSLVRDAAGKEDIIEWLSRFGISDSHSDPEVLICPPQQQKEAPAMVSVGESPGPFVDMGTLQNRGPENSKRLSSLGATGSLITAQSTPQEAANQLVRVGSNNQDGMDSAQEEGTVQATSSQDSTNHTQALLKQRQVQKIEDKLLFQPPVSALGVCPPWKAWTPGPAFGPLWPGAIAATFWRINELHSLHLAWLLSQACFNFPFWQRPLGPIQLKLPGQNPLPLNLEWKQKELAPLPSAESPAGRPDGGLGGEAALQNCPRPEISPKVTSLLVVPGSSDVKDKVSSDLPQIGPPLTSTPQLQAGGEPGDQGSMQLDFKGLEEGPAPVLPTGQGKPVAQGGLTDQSVPGAQTVPETLKVPMAAAVPKAENPSRTQVPSAAPKLPTSRMMLAVHTEPAAPEVPLAPTKPTAQLMATAQKTVVNQPVLVAQVEPTTPKTPQAQKMPVAKTSPAGPKTPKAQAGPAATVSKAPAASKAPAAPKVPVTPRVSRAPKTPAAQKVPTDAGPTLDVARLLSEVQPTSRASVSLLKGQGQAGRQGPQSSGTLALSSKHQFQMEGLLGAWEGAPRQPPRHLQANSTVTSFQRYHEALNTPFELNLSGEPGNQGLRRVVIDGSSVAMVHGLQHFFSCRGIAMAVQFFWNRGHREVTVFVPTWQLKKNRRVRESHFLTKLHSLKMLSITPSQLENGKKITTYDYRFMVKLAEETDGIIVTNEQIHILMNSSKKLMVKDRLLPFTFAGNLFMVPDDPLGRDGPTLDEFLKKPNRLDTDIGNFLKVWKTLPPSSASVTELSDDADSGPLESLPNMEEVREEKEERQDEEQRQGQGTQKAAEEDDLDSSLASVFRVECPSLSEEILRCLSLHDPPDGALDIDLLPGAASPYLGIPWDGKAPCQQVLAHLAQLTIPSNFTALSFFMGFMDSHRDAIPDYEALVGPLHSLLKQKPDWQWDQEHEEAFLALKRALVSALCLMAPNSQLPFRLEVTVSHVALTAILHQEHSGRKHPIAYTSKPLLPDEESQGPQSGGDSPYAVAWALKHFSRCIGDTPVVLDLSYASRTTADPEVREGRRVSKAWLIRWSLLVQDKGKRALELALLQGLLGENRLLTPAASMPRFFQVLPPFSDLSTFVCIHMSGYCFYREDEWCAGFGLYVLSPTSPPVSLSFSCSPYTPTYAHLAAVACGLERFGQSPLPVVFLTHCNWIFSLLWELLPLWRARGFLSSDGAPLPHPSLLSYIISLTSGLSSLPFIYRTSYRGSLFAVTVDTLAKQGAQGGGQWWSLPKDVPAPTVSPHAMGKRPNLLALQLSDSTLADIIARLQAGQKLSGSSPFSSAFNSLSLDKESGLLMFKGDKKPRVWVVPTQLRRDLIFSVHDIPLGAHQRPEETYKKLRLLGWWPGMQEHVKDYCRSCLFCIPRNLIGSELKVIESPWPLRSTAPWSNLQIEVVGPVTISEEGHKHVLIVADPNTRWVEAFPLKPYTHTAVAQVLLQHVFARWGVPVRLEAAQGPQFARHVLVSCGLALGAQVASLSRDLQFPCLTSSGAYWEFKRALKEFIFLHGKKWAASLPLLHLAFRASSTDATPFKVLTGGESRLTEPLWWEMSSANIEGLKMDVFLLQLVGELLELHWRVADKASEKAENRRFKRESQEKEWNVGDQVLLLSLPRNGSSAKWVGPFYIGDRLSLSLYRIWGFPTPEKLGCIYPSSLMKAFAKSGTPLSFKVLEQ.

Disordered regions lie at residues Ser289–His315, Leu424–Pro450, Asp467–Ser533, Glu618–Gly691, and Val711–Leu731. Over residues Glu618–Ala627 the composition is skewed to polar residues. The segment covering Pro649–Pro672 has biased composition (low complexity). In terms of domain architecture, RNase NYN spans Leu792–Glu942. The interval Ser968–Leu1019 is disordered. Residues Glu990 to Arg1005 show a composition bias toward basic and acidic residues. An RNase H type-1 domain is found at Leu1304–Gln1450. The next 2 membrane-spanning stretches (helical) occupy residues Val1372–Trp1392 and Pro1408–Tyr1428. The region spanning Arg1609–Trp1774 is the Integrase catalytic domain.

It is found in the membrane. This Homo sapiens (Human) protein is Protein NYNRIN (NYNRIN).